A 215-amino-acid chain; its full sequence is MNIILFGPPGAGKGTQAKKLVDFYGIPQISTGDILRANVREGTELGLAAKAYMDKGELVPDNVLIGIIKNRLNEEDCKKGFILDGYPRTVPQADALETILDEIDKPIDVVLNLEVPDEVLVERISGRLMCKCGASYHTIANPPKKDNICDICGGEVYQRDDDKAEAVQNRLDVYKKQTQPLINYYEEKGILVTLDGTKDINVVFEDIKAVLAKFA.

10-15 contacts ATP; the sequence is GAGKGT. The NMP stretch occupies residues 30–59; the sequence is STGDILRANVREGTELGLAAKAYMDKGELV. AMP contacts are provided by residues Thr-31, Arg-36, 57–59, 85–88, and Gln-92; these read ELV and GYPR. An LID region spans residues 126 to 162; the sequence is GRLMCKCGASYHTIANPPKKDNICDICGGEVYQRDDD. Arg-127 is an ATP binding site. 2 residues coordinate Zn(2+): Cys-130 and Cys-132. 135 to 136 is an ATP binding site; sequence SY. Positions 149 and 152 each coordinate Zn(2+). AMP is bound by residues Arg-159 and Arg-170. Lys-198 lines the ATP pocket.

The protein belongs to the adenylate kinase family. As to quaternary structure, monomer.

Its subcellular location is the cytoplasm. The enzyme catalyses AMP + ATP = 2 ADP. It functions in the pathway purine metabolism; AMP biosynthesis via salvage pathway; AMP from ADP: step 1/1. In terms of biological role, catalyzes the reversible transfer of the terminal phosphate group between ATP and AMP. Plays an important role in cellular energy homeostasis and in adenine nucleotide metabolism. The chain is Adenylate kinase from Methanosarcina mazei (strain ATCC BAA-159 / DSM 3647 / Goe1 / Go1 / JCM 11833 / OCM 88) (Methanosarcina frisia).